Reading from the N-terminus, the 195-residue chain is Peptidyl-tRNA hydrolase (195 aa).

Position 18 (Tyr-18) interacts with tRNA. His-23 serves as the catalytic Proton acceptor. TRNA contacts are provided by Tyr-69, Asn-71, and Asn-117.

This sequence belongs to the PTH family. Monomer.

It localises to the cytoplasm. The enzyme catalyses an N-acyl-L-alpha-aminoacyl-tRNA + H2O = an N-acyl-L-amino acid + a tRNA + H(+). Its function is as follows. Hydrolyzes ribosome-free peptidyl-tRNAs (with 1 or more amino acids incorporated), which drop off the ribosome during protein synthesis, or as a result of ribosome stalling. Catalyzes the release of premature peptidyl moieties from peptidyl-tRNA molecules trapped in stalled 50S ribosomal subunits, and thus maintains levels of free tRNAs and 50S ribosomes. This is Peptidyl-tRNA hydrolase from Nitrosomonas eutropha (strain DSM 101675 / C91 / Nm57).